Here is a 230-residue protein sequence, read N- to C-terminus: ATP phosphoribosyltransferase (230 aa).

The protein belongs to the ATP phosphoribosyltransferase family. Short subfamily. In terms of assembly, heteromultimer composed of HisG and HisZ subunits.

It is found in the cytoplasm. The catalysed reaction is 1-(5-phospho-beta-D-ribosyl)-ATP + diphosphate = 5-phospho-alpha-D-ribose 1-diphosphate + ATP. Its pathway is amino-acid biosynthesis; L-histidine biosynthesis; L-histidine from 5-phospho-alpha-D-ribose 1-diphosphate: step 1/9. In terms of biological role, catalyzes the condensation of ATP and 5-phosphoribose 1-diphosphate to form N'-(5'-phosphoribosyl)-ATP (PR-ATP). Has a crucial role in the pathway because the rate of histidine biosynthesis seems to be controlled primarily by regulation of HisG enzymatic activity. The polypeptide is ATP phosphoribosyltransferase (hisG) (Chelativorans sp. (strain BNC1)).